A 142-amino-acid chain; its full sequence is Transcriptional regulator MraZ (142 aa).

2 consecutive SpoVT-AbrB domains span residues 5 to 51 and 77 to 120; these read ASAL…PRPE and AMDV…DSQT.

The protein belongs to the MraZ family. Forms oligomers.

It localises to the cytoplasm. It is found in the nucleoid. This Burkholderia multivorans (strain ATCC 17616 / 249) protein is Transcriptional regulator MraZ.